Reading from the N-terminus, the 134-residue chain is GSH-induced LITAF domain protein (134 aa).

Residues 33-113 (DPLGAPIQQT…CGNKVADFEK (81 aa)) form the LITAF domain. Cys-53 and Cys-56 together coordinate Zn(2+). The membrane-binding amphipathic helix stretch occupies residues 68–88 (PGVAAVVACMMPFMLGFCFLC). Positions 101 and 104 each coordinate Zn(2+).

This sequence belongs to the CDIP1/LITAF family. In terms of assembly, interacts (via N- and C-terminal) with MIEL1 and LSD1 (via N-terminus).

The protein resides in the cell membrane. Its function is as follows. Acts as a membrane anchor, bringing other regulators of programmed cell death (PCD) to the plasma membrane. Negatively regulates hypersensitive cell death. The sequence is that of GSH-induced LITAF domain protein from Arabidopsis thaliana (Mouse-ear cress).